A 745-amino-acid chain; its full sequence is Phosphoribosylformylglycinamidine synthase subunit PurL (745 aa).

Residue histidine 47 is part of the active site. Tyrosine 50 and lysine 90 together coordinate ATP. Glutamate 92 is a binding site for Mg(2+). Residues 93 to 96 (SHNH) and arginine 115 contribute to the substrate site. Residue histidine 94 is the Proton acceptor of the active site. Aspartate 116 lines the Mg(2+) pocket. Substrate is bound at residue glutamine 240. Aspartate 268 serves as a coordination point for Mg(2+). 312–314 (ESQ) contributes to the substrate binding site. ATP contacts are provided by asparagine 501 and glycine 538. Asparagine 539 lines the Mg(2+) pocket. Serine 541 contributes to the substrate binding site.

It belongs to the FGAMS family. In terms of assembly, monomer. Part of the FGAM synthase complex composed of 1 PurL, 1 PurQ and 2 PurS subunits.

It is found in the cytoplasm. The enzyme catalyses N(2)-formyl-N(1)-(5-phospho-beta-D-ribosyl)glycinamide + L-glutamine + ATP + H2O = 2-formamido-N(1)-(5-O-phospho-beta-D-ribosyl)acetamidine + L-glutamate + ADP + phosphate + H(+). It participates in purine metabolism; IMP biosynthesis via de novo pathway; 5-amino-1-(5-phospho-D-ribosyl)imidazole from N(2)-formyl-N(1)-(5-phospho-D-ribosyl)glycinamide: step 1/2. Functionally, part of the phosphoribosylformylglycinamidine synthase complex involved in the purines biosynthetic pathway. Catalyzes the ATP-dependent conversion of formylglycinamide ribonucleotide (FGAR) and glutamine to yield formylglycinamidine ribonucleotide (FGAM) and glutamate. The FGAM synthase complex is composed of three subunits. PurQ produces an ammonia molecule by converting glutamine to glutamate. PurL transfers the ammonia molecule to FGAR to form FGAM in an ATP-dependent manner. PurS interacts with PurQ and PurL and is thought to assist in the transfer of the ammonia molecule from PurQ to PurL. The polypeptide is Phosphoribosylformylglycinamidine synthase subunit PurL (Leptospira interrogans serogroup Icterohaemorrhagiae serovar Lai (strain 56601)).